A 437-amino-acid polypeptide reads, in one-letter code: GTPase Der (437 aa).

2 EngA-type G domains span residues 4–168 (PVVA…PAED) and 177–352 (IRVS…QAHS). Residues 10-17 (GRPNVGKS), 57-61 (DTGGI), 120-123 (NKAD), 183-190 (GRPNVGKS), 230-234 (DTAGM), and 295-298 (NKWD) contribute to the GTP site. In terms of domain architecture, KH-like spans 353 to 437 (MRIPTAVLND…PVRIWTRKKT (85 aa)).

This sequence belongs to the TRAFAC class TrmE-Era-EngA-EngB-Septin-like GTPase superfamily. EngA (Der) GTPase family. As to quaternary structure, associates with the 50S ribosomal subunit.

GTPase that plays an essential role in the late steps of ribosome biogenesis. The protein is GTPase Der of Brevibacillus brevis (strain 47 / JCM 6285 / NBRC 100599).